We begin with the raw amino-acid sequence, 450 residues long: Phosphoglucosamine mutase (450 aa).

S101 serves as the catalytic Phosphoserine intermediate. Mg(2+)-binding residues include S101, D241, D243, and D245. Position 101 is a phosphoserine (S101).

It belongs to the phosphohexose mutase family. It depends on Mg(2+) as a cofactor. Activated by phosphorylation.

It carries out the reaction alpha-D-glucosamine 1-phosphate = D-glucosamine 6-phosphate. Catalyzes the conversion of glucosamine-6-phosphate to glucosamine-1-phosphate. This is Phosphoglucosamine mutase from Ligilactobacillus salivarius (strain UCC118) (Lactobacillus salivarius).